A 332-amino-acid polypeptide reads, in one-letter code: MSDINKPFLVVIVGPTASGKTELSIELAKQINGEIISGDSMQVYKQMDIGTAKVTNEEMDGIPHYMIDILNPDDSFSVYDFKLRAQALIEDITSRGKIPIIAGGTGLYIQSLIYDYPFDDETVSKEVEQKTQLQLQKLEPLTNQEVHDYLATFDPQSAKDIHPNNRKRVLRAIEYYLNTKKLISSRKKVQQFTENYDTLLIGIEMSRKTLYSRINKRVDIMLGHGLFNEVKNLVEQGYESTQSMQAIGYKELVPVVNGELSIDQAVETLKQHSRQYAKRQLTWFKNKLTVQWFNRETMSLQMMLDEITTQINKRSSKHDCKPQHPRSSTREL.

14-21 lines the ATP pocket; it reads GPTASGKT. Substrate is bound at residue 16–21; it reads TASGKT. The tract at residues 39-42 is interaction with substrate tRNA; it reads DSMQ. Residues 313 to 332 form a disordered region; it reads KRSSKHDCKPQHPRSSTREL. Residues 317–332 show a composition bias toward basic and acidic residues; it reads KHDCKPQHPRSSTREL.

Belongs to the IPP transferase family. In terms of assembly, monomer. It depends on Mg(2+) as a cofactor.

The catalysed reaction is adenosine(37) in tRNA + dimethylallyl diphosphate = N(6)-dimethylallyladenosine(37) in tRNA + diphosphate. In terms of biological role, catalyzes the transfer of a dimethylallyl group onto the adenine at position 37 in tRNAs that read codons beginning with uridine, leading to the formation of N6-(dimethylallyl)adenosine (i(6)A). This is tRNA dimethylallyltransferase from Staphylococcus haemolyticus (strain JCSC1435).